Reading from the N-terminus, the 864-residue chain is Leucine--tRNA ligase (864 aa).

Positions Pro42–His52 match the 'HIGH' region motif. Positions Lys624 to Ser628 match the 'KMSKS' region motif. Lys627 contacts ATP.

This sequence belongs to the class-I aminoacyl-tRNA synthetase family.

The protein localises to the cytoplasm. The enzyme catalyses tRNA(Leu) + L-leucine + ATP = L-leucyl-tRNA(Leu) + AMP + diphosphate. This chain is Leucine--tRNA ligase, found in Burkholderia mallei (strain ATCC 23344).